A 153-amino-acid polypeptide reads, in one-letter code: 3-hydroxyacyl-[acyl-carrier-protein] dehydratase FabZ (153 aa).

The active site involves H57.

This sequence belongs to the thioester dehydratase family. FabZ subfamily.

It is found in the cytoplasm. It catalyses the reaction a (3R)-hydroxyacyl-[ACP] = a (2E)-enoyl-[ACP] + H2O. Its function is as follows. Involved in unsaturated fatty acids biosynthesis. Catalyzes the dehydration of short chain beta-hydroxyacyl-ACPs and long chain saturated and unsaturated beta-hydroxyacyl-ACPs. In Vibrio cholerae serotype O1 (strain ATCC 39315 / El Tor Inaba N16961), this protein is 3-hydroxyacyl-[acyl-carrier-protein] dehydratase FabZ.